We begin with the raw amino-acid sequence, 371 residues long: MRVLHVYKTYYPDTYGGIEQVIYQLSQGCARRGIAADVFTFSPDKETGPVAYEDHRVIYNKQLFEIASTPFSLKALKRFKQIKDDYDIINYHFPFPFMDMLHLSARPDARTVVTYHSDIVKQKRLMKLYQPLQERFLASVDCIVASSPNYVASSQTLKKYQDKTVVIPFGLEQHDVQHDSQRVAHWRETVGDNFFLFVGAFRYYKGLHILLDAAERSRLPVVIVGGGPLEAEVRREAQQRGLSNVVFTGMLNDEDKYILFQLCRGVVFPSHLRSEAFGITLLEGARFARPLISCEIGTGTSFINQDKVSGCVIPPNDSQALVEAMNELWNNEETSNRYGENSRRRFEEMFTADHMIDAYVNLYTTLLESKS.

It belongs to the glycosyltransferase group 1 family. Glycosyltransferase 4 subfamily.

It catalyses the reaction N-acetyl-alpha-D-glucosaminyl-di-trans,octa-cis-undecaprenyl diphosphate + GDP-alpha-D-mannose = alpha-D-mannosyl-(1-&gt;3)-N-acetyl-alpha-D-glucosaminyl-di-trans,octa-cis-undecaprenyl diphosphate + GDP + H(+). It functions in the pathway bacterial outer membrane biogenesis; LPS O-antigen biosynthesis. In terms of biological role, mannosyltransferase involved in the biosynthesis of the repeat unit of the lipopolysaccharide (LPS) O-antigen region. Catalyzes the transfer of a single alpha-(1-&gt;3)-linked mannose residue to the acceptor N-acetyl-glucosaminyl-diphospho-undecaprenol during the synthesis of the adapter region. The chain is O-antigen chain mannosyltransferase C from Escherichia coli.